The following is a 54-amino-acid chain: Large ribosomal subunit protein bL33 (54 aa).

Belongs to the bacterial ribosomal protein bL33 family.

This chain is Large ribosomal subunit protein bL33, found in Herpetosiphon aurantiacus (strain ATCC 23779 / DSM 785 / 114-95).